A 738-amino-acid polypeptide reads, in one-letter code: Isocitrate dehydrogenase [NADP] (738 aa).

2 residues coordinate NADP(+): Asn83 and Ser85. Ser130, Asn133, Arg137, Arg143, and Lys253 together coordinate D-threo-isocitrate. NADP(+) is bound at residue Asn133. Asp346 serves as a coordination point for Mg(2+). Tyr416 and Arg543 together coordinate D-threo-isocitrate. Positions 544 and 548 each coordinate Mg(2+). 5 residues coordinate NADP(+): Gly580, His585, Arg596, Asp598, and Arg645.

The protein belongs to the monomeric-type IDH family. In terms of assembly, monomer. The cofactor is Mg(2+). Mn(2+) serves as cofactor.

Its subcellular location is the cytoplasm. The enzyme catalyses D-threo-isocitrate + NADP(+) = 2-oxoglutarate + CO2 + NADPH. Its activity is regulated as follows. Weakly inhibited by oxaloacetate, 2-oxoglutarate and citrate. Severely inhibited by oxaloacetate plus glyoxylate. Functionally, catalyzes the oxidative decarboxylation of isocitrate to 2-oxoglutarate and carbon dioxide with the concomitant reduction of NADP(+). Cannot use NAD(+). The polypeptide is Isocitrate dehydrogenase [NADP] (Corynebacterium glutamicum (strain ATCC 13032 / DSM 20300 / JCM 1318 / BCRC 11384 / CCUG 27702 / LMG 3730 / NBRC 12168 / NCIMB 10025 / NRRL B-2784 / 534)).